Here is a 315-residue protein sequence, read N- to C-terminus: Porphobilinogen deaminase (315 aa).

Cys234 is modified (S-(dipyrrolylmethanemethyl)cysteine).

The protein belongs to the HMBS family. As to quaternary structure, monomer. Requires dipyrromethane as cofactor.

It catalyses the reaction 4 porphobilinogen + H2O = hydroxymethylbilane + 4 NH4(+). It participates in porphyrin-containing compound metabolism; protoporphyrin-IX biosynthesis; coproporphyrinogen-III from 5-aminolevulinate: step 2/4. Its function is as follows. Tetrapolymerization of the monopyrrole PBG into the hydroxymethylbilane pre-uroporphyrinogen in several discrete steps. In Mycobacterium leprae (strain TN), this protein is Porphobilinogen deaminase (hemC).